We begin with the raw amino-acid sequence, 91 residues long: Kazal-type trypsin inhibitor (91 aa).

The first 22 residues, 1–22 (MRHIGVFVGVLALALVLLVVEA), serve as a signal peptide directing secretion. The 54-residue stretch at 25–78 (DAERGVCACPRIYMPVCGSNLKTYNNDCLLRCEINSDLGRANNLRKIADQACDN) folds into the Kazal-like domain. 3 cysteine pairs are disulfide-bonded: cysteine 31–cysteine 56, cysteine 33–cysteine 52, and cysteine 41–cysteine 76. An N-linked (GlcNAc...) asparagine glycan is attached at asparagine 78.

As to quaternary structure, interacts with human PLG (plasmin). In terms of tissue distribution, female salivary gland. Female gut at 3 and 24 hours after blood feeding. Female carcass. Male tissues. Not detected in ovary and fat body at 3 and 24 hours after blood feeding.

The protein resides in the secreted. Its function is as follows. Anticoagulant protein that decreases host thrombin (F2) activity via an uncompetitive inhibition mechanism. Inhibits amidolytic activity of host plasmin (PLG). Inhibits amidolytic activity of host trypsin. Inhibits trypsin-like endogenous activity from gut of female mosquitoes 24 hours after feeding and weakly affects enzyme activity from gut 3 hours after feeding, suggesting a possible role as an inhibitor of endogenous proteases. Functionally, (Microbial infection) Limits host plasmin-mediated enhancement of dengue virus type 2 infection in mosquito midgut. The polypeptide is Kazal-type trypsin inhibitor (Aedes aegypti (Yellowfever mosquito)).